The following is a 78-amino-acid chain: DNA-directed RNA polymerase subunit Rpo5 (78 aa).

The protein belongs to the archaeal Rpo5/eukaryotic RPB5 RNA polymerase subunit family. Part of the RNA polymerase complex.

It is found in the cytoplasm. It carries out the reaction RNA(n) + a ribonucleoside 5'-triphosphate = RNA(n+1) + diphosphate. Its function is as follows. DNA-dependent RNA polymerase (RNAP) catalyzes the transcription of DNA into RNA using the four ribonucleoside triphosphates as substrates. The sequence is that of DNA-directed RNA polymerase subunit Rpo5 from Methanococcoides burtonii (strain DSM 6242 / NBRC 107633 / OCM 468 / ACE-M).